A 130-amino-acid polypeptide reads, in one-letter code: Small ribosomal subunit protein uS9 (130 aa).

It belongs to the universal ribosomal protein uS9 family.

The protein is Small ribosomal subunit protein uS9 of Phytoplasma australiense.